The sequence spans 128 residues: Fluoride-specific ion channel FluC (128 aa).

4 helical membrane passes run 5-25 (ALVA…SMVI), 32-52 (TFPW…GLFA), 70-90 (FFMV…LQTL), and 106-126 (VGSV…ATII). Gly77 and Thr80 together coordinate Na(+).

This sequence belongs to the fluoride channel Fluc/FEX (TC 1.A.43) family.

Its subcellular location is the cell inner membrane. It carries out the reaction fluoride(in) = fluoride(out). With respect to regulation, na(+) is not transported, but it plays an essential structural role and its presence is essential for fluoride channel function. In terms of biological role, fluoride-specific ion channel. Important for reducing fluoride concentration in the cell, thus reducing its toxicity. This Paramagnetospirillum magneticum (strain ATCC 700264 / AMB-1) (Magnetospirillum magneticum) protein is Fluoride-specific ion channel FluC.